Reading from the N-terminus, the 875-residue chain is Translation initiation factor IF-2 (875 aa).

2 disordered regions span residues 123 to 204 (EKEK…EKPK) and 240 to 278 (ETKE…PVET). The segment covering 240-252 (ETKEEKAELEALR) has biased composition (basic and acidic residues). A compositionally biased stretch (basic residues) spans 259 to 268 (PKKKKKKKKK). A compositionally biased stretch (basic and acidic residues) spans 269-278 (KEEEKAPVET). A tr-type G domain is found at 379-547 (ERPPVVTVMG…NILLVSEILE (169 aa)). The interval 388-395 (GHVDHGKT) is G1. Residue 388–395 (GHVDHGKT) coordinates GTP. The interval 413 to 417 (GITQH) is G2. The tract at residues 435–438 (DTPG) is G3. GTP-binding positions include 435–439 (DTPGH) and 489–492 (NKID). Positions 489 to 492 (NKID) are G4. The G5 stretch occupies residues 525 to 527 (SAK).

It belongs to the TRAFAC class translation factor GTPase superfamily. Classic translation factor GTPase family. IF-2 subfamily.

The protein localises to the cytoplasm. In terms of biological role, one of the essential components for the initiation of protein synthesis. Protects formylmethionyl-tRNA from spontaneous hydrolysis and promotes its binding to the 30S ribosomal subunits. Also involved in the hydrolysis of GTP during the formation of the 70S ribosomal complex. The sequence is that of Translation initiation factor IF-2 from Persephonella marina (strain DSM 14350 / EX-H1).